Here is a 451-residue protein sequence, read N- to C-terminus: Protein naked cuticle homolog 2 (451 aa).

Residues 1–108 (MGKLQSKHAA…PRGPGGQRLN (108 aa)) form a disordered region. A lipid anchor (N-myristoyl glycine) is attached at Gly-2. A targeting to the basolateral cell membrane region spans residues 2–173 (GKLQSKHAAA…GSSKTLRVKL (172 aa)). Composition is skewed to basic and acidic residues over residues 34–63 (KGAEEAERRARDKQELPNGDPKEGPFREDQ) and 89–99 (DGERAANREGP). Residues 113-178 (QCDVSVEEDD…LRVKLTVSPE (66 aa)) are interaction with DVL1, DVL2 and DVL3. Positions 119–154 (EEDDRQEWTFTLYDFDNCGKVTREDMSSLMHTIYEV) constitute an EF-hand domain. Residues Asp-132, Asp-134, Lys-138, and Asp-143 each contribute to the Ca(2+) site. 2 disordered regions span residues 162 to 237 (SSGS…PYCV) and 256 to 408 (YTSR…TVEH). Over residues 180 to 215 (SSKRKEGPPAGQDREPTRCRMEGELAEEPRVADRRL) the composition is skewed to basic and acidic residues. The segment at 300–385 (QVLVEHVVPA…PPPPYGHKRY (86 aa)) is interaction with TGFA. The segment covering 332–351 (KSPKGSGKPPGVPASSKSGK) has biased composition (low complexity).

It belongs to the NKD family. Interacts with DVL1, DVL2, DVL3 and PPP2R3A. Interacts with RNF25 and TGFA (via cytoplasmic domain). In terms of processing, ubiquitinated, leading to rapid proteasomal degradation. Interaction with TGFA interferes with RNF25 binding and protects against ubiquitination mediated by RNF25. As to expression, expressed in kidney, lung, pancreas and spleen.

It localises to the cell membrane. The protein localises to the cytoplasm. The protein resides in the cytoplasmic vesicle. Cell autonomous antagonist of the canonical Wnt signaling pathway. May activate a second Wnt signaling pathway that controls planar cell polarity. Required for processing of TGFA and for targeting of TGFA to the basolateral membrane of polarized epithelial cells. The protein is Protein naked cuticle homolog 2 (NKD2) of Homo sapiens (Human).